We begin with the raw amino-acid sequence, 513 residues long: Glycogen synthase (513 aa).

Lys-47 contacts ADP-alpha-D-glucose.

The protein belongs to the glycosyltransferase 1 family. Bacterial/plant glycogen synthase subfamily.

It carries out the reaction [(1-&gt;4)-alpha-D-glucosyl](n) + ADP-alpha-D-glucose = [(1-&gt;4)-alpha-D-glucosyl](n+1) + ADP + H(+). Its pathway is glycan biosynthesis; glycogen biosynthesis. Functionally, synthesizes alpha-1,4-glucan chains using ADP-glucose. This chain is Glycogen synthase, found in Pseudomonas aeruginosa (strain ATCC 15692 / DSM 22644 / CIP 104116 / JCM 14847 / LMG 12228 / 1C / PRS 101 / PAO1).